The sequence spans 598 residues: Acetylcholine receptor subunit alpha-type acr-5 (598 aa).

The N-terminal stretch at 1-16 is a signal peptide; the sequence is MLPNIILILLIRYCSC. Over 17–323 the chain is Extracellular; the sequence is GAGSRVYEKY…HLVIRRKPLY (307 aa). Asparagine 54, asparagine 71, asparagine 77, asparagine 134, asparagine 178, and asparagine 252 each carry an N-linked (GlcNAc...) asparagine glycan. The helical transmembrane segment at 324–344 threads the bilayer; the sequence is YMINLVVPTSIITIVAVTGFF. The Cytoplasmic portion of the chain corresponds to 345 to 356; that stretch reads TPTSSSSERDEK. The helical transmembrane segment at 357-377 threads the bilayer; the sequence is LYLGINTLLTMSVMMLMVCNQ. The Extracellular segment spans residues 378–391; that stretch reads MPSTSTYVPLMSWY. A helical transmembrane segment spans residues 392–412; sequence YIGIIMVIVVGTFLATGVLAI. The Cytoplasmic segment spans residues 413–563; the sequence is HGQKHYNKPI…WEFLANVLDR (151 aa). A helical transmembrane segment spans residues 564-584; that stretch reads ILLTIFCGFTFAVFIILIGFD. Residues 585–598 are Extracellular-facing; that stretch reads SFFTFHTDSPPKTM.

The protein belongs to the ligand-gated ion channel (TC 1.A.9) family. Acetylcholine receptor (TC 1.A.9.1) subfamily.

The protein resides in the postsynaptic cell membrane. Its subcellular location is the cell membrane. Subunit of nicotinic acetylcholine receptor (nAChR). Involved in nAChR sensitivity to nicotine. Modulates locomotion towards the drug nicotine. This chain is Acetylcholine receptor subunit alpha-type acr-5, found in Caenorhabditis elegans.